Reading from the N-terminus, the 133-residue chain is Salivary cystatin-L (133 aa).

The first 19 residues, 1-19, serve as a signal peptide directing secretion; sequence MTSTFALVLLLGGMAVCVA. Residues 30–118 enclose the Cystatin domain; it reads ANHQANPEFL…RTCTTVVFEN (89 aa). Intrachain disulfides connect cysteine 89–cysteine 100 and cysteine 111–cysteine 130.

Belongs to the cystatin family. As to quaternary structure, monomer. Can form homodimers in vitro, but probably not in vivo. Homodimers are predicted to be inactive; dimerization disrupts the interaction with target proteases. In terms of tissue distribution, detected in saliva (at protein level). Detected in salivary gland and midgut.

The protein localises to the secreted. Its function is as follows. Contributes to the suppression of the host's immune response to tick salivary proteins and is important for successful feeding on hosts. Inhibitor of cysteine proteinases. Inhibits host papain and cathepsin L (CTSL) (in vitro). Inhibits host cathepsin S (CTSS) (in vitro). Inhibits host CTSV and CTSC, but to a lesser degree (in vitro). Inhibits host immune responses via its inhibition of host cathepsins. Inhibits differentiation of host dendritic cells. Inhibits proliferation of host T-cells in response to antigen stimulus. Down-regulates IL1B production by host mast cells, and this then leads to impaired activation of IL1R1, resulting in decreased IL9 production. Inhibits host inflammatory reactions and recruitment of host neutrophils. Attenuates IFN-beta (IFNB1)-triggered JAK/STAT signaling pathway in mouse dendritic cells. Functionally, (Microbial infection) Down-regulates TLR2-mediated host responses to infection by Borrelia burgdorferi and the production of the chemokine CCL3 by host dendritic cells. Down-regulates host responses to infection by B.burgdorferi and the production of IFNB1 by host dendritic cells. The sequence is that of Salivary cystatin-L from Ixodes scapularis (Black-legged tick).